The following is a 323-amino-acid chain: tRNA dimethylallyltransferase (323 aa).

13–20 is an ATP binding site; sequence GPTASGKT. 15 to 20 is a binding site for substrate; that stretch reads TASGKT. 4 interaction with substrate tRNA regions span residues 42 to 45, 166 to 170, 251 to 256, and 284 to 291; these read DSAL, QRIQR, RCVGYR, and KRQITWLR.

The protein belongs to the IPP transferase family. In terms of assembly, monomer. Requires Mg(2+) as cofactor.

It carries out the reaction adenosine(37) in tRNA + dimethylallyl diphosphate = N(6)-dimethylallyladenosine(37) in tRNA + diphosphate. Functionally, catalyzes the transfer of a dimethylallyl group onto the adenine at position 37 in tRNAs that read codons beginning with uridine, leading to the formation of N6-(dimethylallyl)adenosine (i(6)A). The polypeptide is tRNA dimethylallyltransferase (Acidovorax ebreus (strain TPSY) (Diaphorobacter sp. (strain TPSY))).